Consider the following 838-residue polypeptide: E3 ubiquitin-protein ligase RNF19A (838 aa).

Positions 41–61 (DRDLQSSASSVSLPSVKKAPK) are disordered. A compositionally biased stretch (low complexity) spans 46–57 (SSASSVSLPSVK). The segment at 128–351 (DFIECPLCLL…LSPSGCTFWG (224 aa)) is TRIAD supradomain. Zn(2+) is bound by residues Cys132, Cys135, Cys150, His152, Cys155, Cys158, Cys176, Cys179, Cys219, Cys224, Cys241, Cys246, Cys251, Cys254, His259, Cys264, Cys301, and Cys304. Residues 132–179 (CPLCLLRHSKDRFPDIMTCHHRSCVDCLRQYLRIEISESRVNISCPEC) form an RING-type 1 zinc finger. The IBR-type zinc finger occupies 199–264 (EKYEEFMLRR…KQIWHPNQTC (66 aa)). The RING-type 2; atypical zinc-finger motif lies at 301–332 (CPRCAAYIIKMNDGSCNHMTCAVCGCEFCWLC). Residue Cys316 is part of the active site. Residues Cys321, Cys324, Cys329, Cys332, His340, and Cys347 each coordinate Zn(2+). The next 2 membrane-spanning stretches (helical) occupy residues 368-388 (LVGA…AMII) and 424-444 (VIVS…IMLA). 2 disordered regions span residues 622-685 (SKPS…GNMK) and 700-721 (QQST…PSVA). Residues 630–662 (NSGSSSVDDGSATRSHAGGSSSGLPEGKSSATK) show a composition bias toward polar residues. Residue Ser631 is modified to Phosphoserine. Positions 660–838 (ATKWSKEATA…ELKVAIQTEI (179 aa)) are interaction with CASR. The span at 671–683 (KKSKSGKLRKKGN) shows a compositional bias: basic residues. The segment covering 700 to 717 (QQSTNSSEFEAPSLSDSM) has biased composition (polar residues).

The protein belongs to the RBR family. RNF19 subfamily. Interacts with UBE2L3 and UBE2L6. Interacts with transcription factor Sp1. Interacts with VCP, CASR, SNCAIP and with some SOD1 variants which cause amyotrophic lateral sclerosis, but not with wild-type SOD1. As to expression, widely expressed, with highest levels in heart. Ubiquitously expressed in the central nervous system.

It is found in the membrane. Its subcellular location is the cytoplasm. The protein localises to the cytoskeleton. It localises to the microtubule organizing center. The protein resides in the centrosome. It catalyses the reaction [E2 ubiquitin-conjugating enzyme]-S-ubiquitinyl-L-cysteine + [acceptor protein]-L-lysine = [E2 ubiquitin-conjugating enzyme]-L-cysteine + [acceptor protein]-N(6)-ubiquitinyl-L-lysine.. It participates in protein modification; protein ubiquitination. E3 ubiquitin-protein ligase which accepts ubiquitin from E2 ubiquitin-conjugating enzymes UBE2L3 and UBE2L6 in the form of a thioester and then directly transfers the ubiquitin to targeted substrates, such as SNCAIP or CASR. Specifically ubiquitinates pathogenic SOD1 variants, which leads to their proteasomal degradation and to neuronal protection. This chain is E3 ubiquitin-protein ligase RNF19A (RNF19A), found in Homo sapiens (Human).